We begin with the raw amino-acid sequence, 201 residues long: Superoxide dismutase [Mn] (201 aa).

Mn(2+) contacts are provided by His-27, His-81, Asp-163, and His-167.

Belongs to the iron/manganese superoxide dismutase family. Homodimer. Mn(2+) is required as a cofactor.

The protein localises to the secreted. The enzyme catalyses 2 superoxide + 2 H(+) = H2O2 + O2. Functionally, destroys superoxide anion radicals which are normally produced within the cells and which are toxic to biological systems. This Streptococcus pyogenes serotype M6 (strain ATCC BAA-946 / MGAS10394) protein is Superoxide dismutase [Mn] (sodA).